A 600-amino-acid polypeptide reads, in one-letter code: Glutamine--fructose-6-phosphate aminotransferase [isomerizing] (600 aa).

Catalysis depends on Cys2, which acts as the Nucleophile; for GATase activity. A Glutamine amidotransferase type-2 domain is found at 2-217 (CGIVGFIGEQ…DKEIVIVTKE (216 aa)). SIS domains follow at residues 283–422 (IRNA…AKGE) and 452–590 (LAKQ…VDKP). The active-site For Fru-6P isomerization activity is the Lys595.

As to quaternary structure, homodimer.

Its subcellular location is the cytoplasm. The catalysed reaction is D-fructose 6-phosphate + L-glutamine = D-glucosamine 6-phosphate + L-glutamate. In terms of biological role, catalyzes the first step in hexosamine metabolism, converting fructose-6P into glucosamine-6P using glutamine as a nitrogen source. The polypeptide is Glutamine--fructose-6-phosphate aminotransferase [isomerizing] (Bacillus cereus (strain ATCC 14579 / DSM 31 / CCUG 7414 / JCM 2152 / NBRC 15305 / NCIMB 9373 / NCTC 2599 / NRRL B-3711)).